Here is a 647-residue protein sequence, read N- to C-terminus: Homologous recombination OB-fold protein (647 aa).

S47 carries the post-translational modification Phosphoserine. Disordered stretches follow at residues 284–361 (ARGT…GPQG), 380–399 (SRTP…RRFP), and 581–631 (SFLK…DDLD). Asymmetric dimethylarginine is present on residues R285, R295, R329, and R337. The span at 287 to 308 (TIQSSPQNRFPCQPFQSPSSWL) shows a compositional bias: polar residues. Residues 319–332 (TPNSSCSTPSRTSS) are compositionally biased toward low complexity. Residues 380-390 (SRTPQQPTHPS) are compositionally biased toward polar residues. Over residues 618-631 (ASPEEELPEADDLD) the composition is skewed to acidic residues.

As to quaternary structure, interacts with MCM8; this interaction is necessary for MCM8-MCM9 helicase complex recruitment to DNA damage sites. Interacts with RPA1; this interaction associates HROB with the RPA complex.

It is found in the nucleus. The protein localises to the chromosome. In terms of biological role, DNA-binding protein involved in homologous recombination that acts by recruiting the MCM8-MCM9 helicase complex to sites of DNA damage to promote DNA repair synthesis. The polypeptide is Homologous recombination OB-fold protein (Homo sapiens (Human)).